The chain runs to 121 residues: Phosphoribosyl-AMP cyclohydrolase (121 aa).

Asp-74 is a binding site for Mg(2+). Residue Cys-75 participates in Zn(2+) binding. The Mg(2+) site is built by Asp-76 and Asp-78. The Zn(2+) site is built by Cys-91 and Cys-98.

Belongs to the PRA-CH family. In terms of assembly, homodimer. The cofactor is Mg(2+). Zn(2+) serves as cofactor.

Its subcellular location is the cytoplasm. It carries out the reaction 1-(5-phospho-beta-D-ribosyl)-5'-AMP + H2O = 1-(5-phospho-beta-D-ribosyl)-5-[(5-phospho-beta-D-ribosylamino)methylideneamino]imidazole-4-carboxamide. It participates in amino-acid biosynthesis; L-histidine biosynthesis; L-histidine from 5-phospho-alpha-D-ribose 1-diphosphate: step 3/9. Functionally, catalyzes the hydrolysis of the adenine ring of phosphoribosyl-AMP. This is Phosphoribosyl-AMP cyclohydrolase from Methanothrix thermoacetophila (strain DSM 6194 / JCM 14653 / NBRC 101360 / PT) (Methanosaeta thermophila).